Reading from the N-terminus, the 204-residue chain is Carbon disulfide hydrolase (204 aa).

The Zn(2+) site is built by Cys-35, His-88, and Cys-91.

This sequence belongs to the beta-class carbonic anhydrase family. As to quaternary structure, forms a hexadecameric catenane homooligomer, through interactions of two interlocked octameric rings. Zn(2+) serves as cofactor.

The enzyme catalyses carbon disulfide + 2 H2O = 2 hydrogen sulfide + CO2 + 2 H(+). It functions in the pathway sulfur metabolism; hydrogen sulfide biosynthesis. Functionally, catalyzes the conversion of carbon disulfide into hydrogen sulfide and carbon dioxide, with carbonyl sulfide as an intermediate. Likely plays a key role in sulfur metabolism in S.solfataricus. Does not show carbonic anhydrase activity (hydration of CO(2) to carbonate). This Saccharolobus solfataricus (strain ATCC 35092 / DSM 1617 / JCM 11322 / P2) (Sulfolobus solfataricus) protein is Carbon disulfide hydrolase.